The chain runs to 67 residues: Large ribosomal subunit protein bL32 (67 aa).

Positions 1–19 (MAVPKRKMSRSNTRSRRSQ) are enriched in basic residues. Residues 1-22 (MAVPKRKMSRSNTRSRRSQWKA) are disordered.

The protein belongs to the bacterial ribosomal protein bL32 family.

In Kineococcus radiotolerans (strain ATCC BAA-149 / DSM 14245 / SRS30216), this protein is Large ribosomal subunit protein bL32.